Reading from the N-terminus, the 153-residue chain is MAWFRPPPPHTQLRPWVPDAIFIPISRAVERVGVFFYNRVLNKTEVGLFDKRWNKNVHGPYCHWRYYGKLDTKFMDVKLGDLPAWMARREKTPSAFYNEFMRNIWRVHNLYYSGPVYNNTVKVIFRFIFAYSFLNWLVKSHRYVDFQKTMYHW.

The protein belongs to the ATPase F chain family. Subunit of the F-type ATPase which has 2 components, CF(1) - the catalytic core - and CF(0) - the membrane proton channel.

It is found in the mitochondrion membrane. Functionally, mitochondrial membrane ATP synthase (F(1)F(0) ATP synthase or Complex V) produces ATP from ADP in the presence of a proton gradient across the membrane which is generated by electron transport complexes of the respiratory chain. F-type ATPases consist of two structural domains, F(1) - containing the extramembraneous catalytic core and F(0) - containing the membrane proton channel, linked together by a central stalk and a peripheral stalk. During catalysis, ATP synthesis in the catalytic domain of F(1) is coupled via a rotary mechanism of the central stalk subunits to proton translocation. Part of the complex F(0) domain. Minor subunit located with subunit a in the membrane. The polypeptide is Putative ATP synthase subunit f, mitochondrial (Caenorhabditis elegans).